Here is a 122-residue protein sequence, read N- to C-terminus: Small ribosomal subunit protein uS13 (122 aa).

Residues 95–122 are disordered; sequence GLPVRGQRTKTNARTRKGPKKTIAGKKK.

Belongs to the universal ribosomal protein uS13 family. As to quaternary structure, part of the 30S ribosomal subunit. Forms a loose heterodimer with protein S19. Forms two bridges to the 50S subunit in the 70S ribosome.

Functionally, located at the top of the head of the 30S subunit, it contacts several helices of the 16S rRNA. In the 70S ribosome it contacts the 23S rRNA (bridge B1a) and protein L5 of the 50S subunit (bridge B1b), connecting the 2 subunits; these bridges are implicated in subunit movement. Contacts the tRNAs in the A and P-sites. The polypeptide is Small ribosomal subunit protein uS13 (Corynebacterium aurimucosum (strain ATCC 700975 / DSM 44827 / CIP 107346 / CN-1) (Corynebacterium nigricans)).